Here is a 682-residue protein sequence, read N- to C-terminus: DNA-directed RNA polymerase subunit beta' (682 aa).

Positions 69, 71, 87, and 90 each coordinate Zn(2+). Mg(2+)-binding residues include aspartate 489, aspartate 491, and aspartate 493.

This sequence belongs to the RNA polymerase beta' chain family. RpoC1 subfamily. In terms of assembly, in plastids the minimal PEP RNA polymerase catalytic core is composed of four subunits: alpha, beta, beta', and beta''. When a (nuclear-encoded) sigma factor is associated with the core the holoenzyme is formed, which can initiate transcription. The cofactor is Mg(2+). Zn(2+) is required as a cofactor.

The protein resides in the plastid. It localises to the chloroplast. It carries out the reaction RNA(n) + a ribonucleoside 5'-triphosphate = RNA(n+1) + diphosphate. DNA-dependent RNA polymerase catalyzes the transcription of DNA into RNA using the four ribonucleoside triphosphates as substrates. This Acorus calamus var. americanus (American sweet flag) protein is DNA-directed RNA polymerase subunit beta'.